A 167-amino-acid chain; its full sequence is Lipoprotein signal peptidase (167 aa).

Transmembrane regions (helical) follow at residues 8-28 (TFLT…VVLL), 46-66 (WGHF…FGLF), 68-88 (QYKI…ALFL), and 101-121 (VALT…LLYG). Residues D125 and D143 contribute to the active site. A helical transmembrane segment spans residues 139–159 (FNLADAFISIGTLLLIGHLYF).

The protein belongs to the peptidase A8 family.

It localises to the cell inner membrane. It catalyses the reaction Release of signal peptides from bacterial membrane prolipoproteins. Hydrolyzes -Xaa-Yaa-Zaa-|-(S,diacylglyceryl)Cys-, in which Xaa is hydrophobic (preferably Leu), and Yaa (Ala or Ser) and Zaa (Gly or Ala) have small, neutral side chains.. It participates in protein modification; lipoprotein biosynthesis (signal peptide cleavage). This protein specifically catalyzes the removal of signal peptides from prolipoproteins. The polypeptide is Lipoprotein signal peptidase (Chlamydia trachomatis serovar A (strain ATCC VR-571B / DSM 19440 / HAR-13)).